The following is a 262-amino-acid chain: Putative glutamine--fructose-6-phosphate aminotransferase [isomerizing] (262 aa).

Cys-2 serves as the catalytic Nucleophile; for GATase activity. The 261-residue stretch at 2 to 262 (CGIFGYCNFL…RKSPPFVHNT (261 aa)) folds into the Glutamine amidotransferase type-2 domain.

It catalyses the reaction D-fructose 6-phosphate + L-glutamine = D-glucosamine 6-phosphate + L-glutamate. It participates in nucleotide-sugar biosynthesis; UDP-N-acetyl-alpha-D-glucosamine biosynthesis; alpha-D-glucosamine 6-phosphate from D-fructose 6-phosphate: step 1/1. In terms of biological role, involved in amino sugar synthesis (formation of chitin, supplies the amino sugars of asparagine-linked oligosaccharides of glycoproteins). The chain is Putative glutamine--fructose-6-phosphate aminotransferase [isomerizing] from Saccharomyces cerevisiae (strain ATCC 204508 / S288c) (Baker's yeast).